A 402-amino-acid chain; its full sequence is Protein prenyltransferase alpha subunit repeat-containing protein 1 (402 aa).

N-acetylalanine is present on Ala2. PFTA repeat units follow at residues 87-120 (LIDV…LNPI), 122-155 (DLHL…QETS), 180-213 (EMEV…KLDV), and 219-252 (ELSS…SQTV). Positions 263–282 (LRSEPALVPPKDEEAAVSTE) are disordered. The PFTA 5 repeat unit spans residues 295-328 (EVEFSTDLIDSYPGHETLWCHRRHIFYLQHHLNA).

The protein belongs to the protein prenyltransferase subunit alpha family.

The chain is Protein prenyltransferase alpha subunit repeat-containing protein 1 (PTAR1) from Homo sapiens (Human).